The chain runs to 309 residues: Taste receptor type 2 member 20 (309 aa).

At 1 to 6 (MMSFLH) the chain is on the extracellular side. A helical transmembrane segment spans residues 7-27 (IVFSILVVVAFILGNFANGFI). Residues 28–46 (ALINFIAWVKRQKISSADQ) are Cytoplasmic-facing. A helical transmembrane segment spans residues 47–67 (IIAALAVSRVGLLWVILLHWY). The Extracellular portion of the chain corresponds to 68 to 79 (STVLNPTSSNLK). The chain crosses the membrane as a helical span at residues 80–100 (VIIFISNAWAVTNHFSIWLAT). Over 101–125 (SLSIFYLLKIVNFSRLIFHHLKRKA) the chain is Cytoplasmic. The chain crosses the membrane as a helical span at residues 126–146 (KSVVLVIVLGSLFFLVCHLVM). Topologically, residues 147–178 (KNTYINVWTEECEGNVTWKIKLRNAMHLSNLT) are extracellular. Residues 179–199 (VAMLANLIPFTLTLISFLLLI) traverse the membrane as a helical segment. Topologically, residues 200 to 229 (YSLCKHLKKMQLHGKGSQDPSTKIHIKALQ) are cytoplasmic. A helical membrane pass occupies residues 230 to 250 (TVTSFLILLAIYFLCLITSFW). The Extracellular portion of the chain corresponds to 251-259 (NSKMRPKEI). Residues 260–280 (VLMLCQAFGIIYPSFHSFILI) traverse the membrane as a helical segment. The Cytoplasmic portion of the chain corresponds to 281-309 (WGNKTLKQTFLSVLWQVTCWAKGQNQSTP).

It belongs to the G-protein coupled receptor T2R family.

Its subcellular location is the membrane. Its function is as follows. Receptor that may play a role in the perception of bitterness and is gustducin-linked. May play a role in sensing the chemical composition of the gastrointestinal content. The activity of this receptor may stimulate alpha gustducin, mediate PLC-beta-2 activation and lead to the gating of TRPM5. The protein is Taste receptor type 2 member 20 (TAS2R20) of Pan paniscus (Pygmy chimpanzee).